A 273-amino-acid polypeptide reads, in one-letter code: MQEAQVRVAIAGANGRMGRQLIQAALAMDGVALGAALVREGSTLLGADAGELAGTGATGVTLKSNLEAVKDDFDVLIDFTRPEGTLAYLAFCRAHNKGMVIGTTGFDDAGKAAIHETATAIPVVFAANFSVGVNVMLKLLEKAAQVMGDYTDIEIIEAHHRHKVDAPSGTALAMGEAIAGALNKDLKSCAVYAREGYTGERVPGTIGFATVRAGDIVGEHTAMFADIGERIEITHKASSRMTFANGAVRAALWLKAQKKGFFDMRDVLNLNDL.

12-17 lines the NAD(+) pocket; that stretch reads GANGRM. Arg39 is an NADP(+) binding site. Residues 102 to 104 and 126 to 129 contribute to the NAD(+) site; these read GTT and AANF. His159 (proton donor/acceptor) is an active-site residue. His160 is a (S)-2,3,4,5-tetrahydrodipicolinate binding site. Lys163 serves as the catalytic Proton donor. 169 to 170 provides a ligand contact to (S)-2,3,4,5-tetrahydrodipicolinate; that stretch reads GT.

Belongs to the DapB family. In terms of assembly, homotetramer.

The protein resides in the cytoplasm. The enzyme catalyses (S)-2,3,4,5-tetrahydrodipicolinate + NAD(+) + H2O = (2S,4S)-4-hydroxy-2,3,4,5-tetrahydrodipicolinate + NADH + H(+). The catalysed reaction is (S)-2,3,4,5-tetrahydrodipicolinate + NADP(+) + H2O = (2S,4S)-4-hydroxy-2,3,4,5-tetrahydrodipicolinate + NADPH + H(+). The protein operates within amino-acid biosynthesis; L-lysine biosynthesis via DAP pathway; (S)-tetrahydrodipicolinate from L-aspartate: step 4/4. Its function is as follows. Catalyzes the conversion of 4-hydroxy-tetrahydrodipicolinate (HTPA) to tetrahydrodipicolinate. The chain is 4-hydroxy-tetrahydrodipicolinate reductase from Cronobacter sakazakii (strain ATCC BAA-894) (Enterobacter sakazakii).